The following is a 314-amino-acid chain: 2,3-dihydroxyphenylpropionate/2,3-dihydroxicinnamic acid 1,2-dioxygenase (314 aa).

His-115 (proton donor) is an active-site residue. His-179 acts as the Proton acceptor in catalysis.

Belongs to the LigB/MhpB extradiol dioxygenase family. As to quaternary structure, homotetramer. It depends on Fe(2+) as a cofactor.

The catalysed reaction is 3-(2,3-dihydroxyphenyl)propanoate + O2 = (2Z,4E)-2-hydroxy-6-oxonona-2,4-dienedioate + H(+). The enzyme catalyses (2E)-3-(2,3-dihydroxyphenyl)prop-2-enoate + O2 = (2Z,4E,7E)-2-hydroxy-6-oxonona-2,4,7-trienedioate + H(+). Its pathway is aromatic compound metabolism; 3-phenylpropanoate degradation. Catalyzes the non-heme iron(II)-dependent oxidative cleavage of 2,3-dihydroxyphenylpropionic acid and 2,3-dihydroxicinnamic acid into 2-hydroxy-6-ketononadienedioate and 2-hydroxy-6-ketononatrienedioate, respectively. In Rhodococcus jostii (strain RHA1), this protein is 2,3-dihydroxyphenylpropionate/2,3-dihydroxicinnamic acid 1,2-dioxygenase.